A 379-amino-acid chain; its full sequence is Leukocyte elastase inhibitor A (379 aa).

Ser300 is modified (phosphoserine).

This sequence belongs to the serpin family. Ov-serpin subfamily. In terms of assembly, monomer.

The protein localises to the secreted. The protein resides in the cytoplasm. It localises to the cytolytic granule. Its subcellular location is the early endosome. Functionally, regulates the activity of the neutrophil proteases. This Rattus norvegicus (Rat) protein is Leukocyte elastase inhibitor A (Serpinb1a).